The sequence spans 917 residues: Isoleucine--tRNA ligase (917 aa).

A 'HIGH' region motif is present at residues 57–67 (PYANGNLHMGH). Glutamate 554 contributes to the L-isoleucyl-5'-AMP binding site. Positions 595–599 (KMSKS) match the 'KMSKS' region motif. An ATP-binding site is contributed by lysine 598. Positions 886, 889, 906, and 909 each coordinate Zn(2+).

This sequence belongs to the class-I aminoacyl-tRNA synthetase family. IleS type 1 subfamily. In terms of assembly, monomer. Requires Zn(2+) as cofactor.

The protein resides in the cytoplasm. It carries out the reaction tRNA(Ile) + L-isoleucine + ATP = L-isoleucyl-tRNA(Ile) + AMP + diphosphate. Its function is as follows. Catalyzes the attachment of isoleucine to tRNA(Ile). As IleRS can inadvertently accommodate and process structurally similar amino acids such as valine, to avoid such errors it has two additional distinct tRNA(Ile)-dependent editing activities. One activity is designated as 'pretransfer' editing and involves the hydrolysis of activated Val-AMP. The other activity is designated 'posttransfer' editing and involves deacylation of mischarged Val-tRNA(Ile). The chain is Isoleucine--tRNA ligase (ileS) from Staphylococcus aureus (strain MSSA476).